Consider the following 327-residue polypeptide: Ribosomal RNA small subunit methyltransferase H (327 aa).

Residues 36-38 (GGH), aspartate 61, phenylalanine 88, aspartate 114, and glutamine 121 contribute to the S-adenosyl-L-methionine site.

The protein belongs to the methyltransferase superfamily. RsmH family.

Its subcellular location is the cytoplasm. It carries out the reaction cytidine(1402) in 16S rRNA + S-adenosyl-L-methionine = N(4)-methylcytidine(1402) in 16S rRNA + S-adenosyl-L-homocysteine + H(+). Functionally, specifically methylates the N4 position of cytidine in position 1402 (C1402) of 16S rRNA. In Chlorobium luteolum (strain DSM 273 / BCRC 81028 / 2530) (Pelodictyon luteolum), this protein is Ribosomal RNA small subunit methyltransferase H.